A 200-amino-acid polypeptide reads, in one-letter code: Riboflavin kinase (200 aa).

The disordered stretch occupies residues 1-20; the sequence is MATARPSIVGPDSGPESPFP. Thr42 and Asn44 together coordinate Mg(2+). The Nucleophile role is filled by Glu110.

This sequence belongs to the flavokinase family. It depends on Zn(2+) as a cofactor. Requires Mg(2+) as cofactor.

The enzyme catalyses riboflavin + ATP = FMN + ADP + H(+). It participates in cofactor biosynthesis; FMN biosynthesis; FMN from riboflavin (ATP route): step 1/1. Catalyzes the phosphorylation of riboflavin (vitamin B2) to form flavin mononucleotide (FMN) coenzyme. This chain is Riboflavin kinase (FMN1), found in Pyricularia oryzae (strain 70-15 / ATCC MYA-4617 / FGSC 8958) (Rice blast fungus).